A 466-amino-acid chain; its full sequence is Phosphomethylpyrimidine synthase (466 aa).

Residues N80, M109, Y139, H175, 195 to 197 (SRG), 236 to 239 (DSLR), and E275 each bind substrate. H279 is a Zn(2+) binding site. Y302 lines the substrate pocket. H343 is a binding site for Zn(2+). C423, C426, and C431 together coordinate [4Fe-4S] cluster.

The protein belongs to the ThiC family. The cofactor is [4Fe-4S] cluster.

The enzyme catalyses 5-amino-1-(5-phospho-beta-D-ribosyl)imidazole + S-adenosyl-L-methionine = 4-amino-2-methyl-5-(phosphooxymethyl)pyrimidine + CO + 5'-deoxyadenosine + formate + L-methionine + 3 H(+). Its pathway is cofactor biosynthesis; thiamine diphosphate biosynthesis. Its function is as follows. Catalyzes the synthesis of the hydroxymethylpyrimidine phosphate (HMP-P) moiety of thiamine from aminoimidazole ribotide (AIR) in a radical S-adenosyl-L-methionine (SAM)-dependent reaction. This Synechococcus sp. (strain CC9902) protein is Phosphomethylpyrimidine synthase.